Reading from the N-terminus, the 231-residue chain is Phosphatidylserine decarboxylase proenzyme (231 aa).

Residue Ser-188 is the Schiff-base intermediate with substrate; via pyruvic acid of the active site. The residue at position 188 (Ser-188) is a Pyruvic acid (Ser); by autocatalysis.

This sequence belongs to the phosphatidylserine decarboxylase family. PSD-A subfamily. As to quaternary structure, heterodimer of a large membrane-associated beta subunit and a small pyruvoyl-containing alpha subunit. The cofactor is pyruvate. Post-translationally, is synthesized initially as an inactive proenzyme. Formation of the active enzyme involves a self-maturation process in which the active site pyruvoyl group is generated from an internal serine residue via an autocatalytic post-translational modification. Two non-identical subunits are generated from the proenzyme in this reaction, and the pyruvate is formed at the N-terminus of the alpha chain, which is derived from the carboxyl end of the proenzyme. The post-translation cleavage follows an unusual pathway, termed non-hydrolytic serinolysis, in which the side chain hydroxyl group of the serine supplies its oxygen atom to form the C-terminus of the beta chain, while the remainder of the serine residue undergoes an oxidative deamination to produce ammonia and the pyruvoyl prosthetic group on the alpha chain.

The protein resides in the cell membrane. The catalysed reaction is a 1,2-diacyl-sn-glycero-3-phospho-L-serine + H(+) = a 1,2-diacyl-sn-glycero-3-phosphoethanolamine + CO2. The protein operates within phospholipid metabolism; phosphatidylethanolamine biosynthesis; phosphatidylethanolamine from CDP-diacylglycerol: step 2/2. Its function is as follows. Catalyzes the formation of phosphatidylethanolamine (PtdEtn) from phosphatidylserine (PtdSer). The protein is Phosphatidylserine decarboxylase proenzyme of Rickettsia akari (strain Hartford).